Here is a 270-residue protein sequence, read N- to C-terminus: Putative phosphoenolpyruvate synthase regulatory protein (270 aa).

150 to 157 provides a ligand contact to ADP; that stretch reads GVSRCGKT.

This sequence belongs to the pyruvate, phosphate/water dikinase regulatory protein family. PSRP subfamily.

It carries out the reaction [pyruvate, water dikinase] + ADP = [pyruvate, water dikinase]-phosphate + AMP + H(+). The catalysed reaction is [pyruvate, water dikinase]-phosphate + phosphate + H(+) = [pyruvate, water dikinase] + diphosphate. Functionally, bifunctional serine/threonine kinase and phosphorylase involved in the regulation of the phosphoenolpyruvate synthase (PEPS) by catalyzing its phosphorylation/dephosphorylation. The protein is Putative phosphoenolpyruvate synthase regulatory protein of Shewanella halifaxensis (strain HAW-EB4).